We begin with the raw amino-acid sequence, 360 residues long: Peptide chain release factor 1 (360 aa).

Gln237 carries the post-translational modification N5-methylglutamine.

It belongs to the prokaryotic/mitochondrial release factor family. Post-translationally, methylated by PrmC. Methylation increases the termination efficiency of RF1.

It localises to the cytoplasm. Its function is as follows. Peptide chain release factor 1 directs the termination of translation in response to the peptide chain termination codons UAG and UAA. This is Peptide chain release factor 1 from Pseudomonas putida (strain W619).